The following is a 181-amino-acid chain: Peptidyl-tRNA hydrolase (181 aa).

Y14 contacts tRNA. H19 serves as the catalytic Proton acceptor. Y60, N62, and N108 together coordinate tRNA.

This sequence belongs to the PTH family. In terms of assembly, monomer.

It is found in the cytoplasm. It carries out the reaction an N-acyl-L-alpha-aminoacyl-tRNA + H2O = an N-acyl-L-amino acid + a tRNA + H(+). In terms of biological role, hydrolyzes ribosome-free peptidyl-tRNAs (with 1 or more amino acids incorporated), which drop off the ribosome during protein synthesis, or as a result of ribosome stalling. Its function is as follows. Catalyzes the release of premature peptidyl moieties from peptidyl-tRNA molecules trapped in stalled 50S ribosomal subunits, and thus maintains levels of free tRNAs and 50S ribosomes. This Metamycoplasma arthritidis (strain 158L3-1) (Mycoplasma arthritidis) protein is Peptidyl-tRNA hydrolase.